The sequence spans 189 residues: Elongation factor P (189 aa).

N6-(3,6-diaminohexanoyl)-5-hydroxylysine is present on K34.

The protein belongs to the elongation factor P family. May be beta-lysylated on the epsilon-amino group of Lys-34 by the combined action of EpmA and EpmB, and then hydroxylated on the C5 position of the same residue by EpmC (if this protein is present). Lysylation is critical for the stimulatory effect of EF-P on peptide-bond formation. The lysylation moiety may extend toward the peptidyltransferase center and stabilize the terminal 3-CCA end of the tRNA. Hydroxylation of the C5 position on Lys-34 may allow additional potential stabilizing hydrogen-bond interactions with the P-tRNA.

Its subcellular location is the cytoplasm. It functions in the pathway protein biosynthesis; polypeptide chain elongation. In terms of biological role, involved in peptide bond synthesis. Alleviates ribosome stalling that occurs when 3 or more consecutive Pro residues or the sequence PPG is present in a protein, possibly by augmenting the peptidyl transferase activity of the ribosome. Modification of Lys-34 is required for alleviation. The chain is Elongation factor P from Dichelobacter nodosus (strain VCS1703A).